Here is a 384-residue protein sequence, read N- to C-terminus: Dual-specificity RNA methyltransferase RlmN (384 aa).

Glu-105 (proton acceptor) is an active-site residue. Positions 111-350 constitute a Radical SAM core domain; it reads EDDRATLCVS…TIVRKTRGDD (240 aa). Cys-118 and Cys-355 are joined by a disulfide. [4Fe-4S] cluster is bound by residues Cys-125, Cys-129, and Cys-132. Residues 179–180, Ser-211, 233–235, and Asn-312 contribute to the S-adenosyl-L-methionine site; these read GE and SLH. Cys-355 serves as the catalytic S-methylcysteine intermediate.

Belongs to the radical SAM superfamily. RlmN family. [4Fe-4S] cluster is required as a cofactor.

The protein localises to the cytoplasm. It carries out the reaction adenosine(2503) in 23S rRNA + 2 reduced [2Fe-2S]-[ferredoxin] + 2 S-adenosyl-L-methionine = 2-methyladenosine(2503) in 23S rRNA + 5'-deoxyadenosine + L-methionine + 2 oxidized [2Fe-2S]-[ferredoxin] + S-adenosyl-L-homocysteine. The enzyme catalyses adenosine(37) in tRNA + 2 reduced [2Fe-2S]-[ferredoxin] + 2 S-adenosyl-L-methionine = 2-methyladenosine(37) in tRNA + 5'-deoxyadenosine + L-methionine + 2 oxidized [2Fe-2S]-[ferredoxin] + S-adenosyl-L-homocysteine. Specifically methylates position 2 of adenine 2503 in 23S rRNA and position 2 of adenine 37 in tRNAs. m2A2503 modification seems to play a crucial role in the proofreading step occurring at the peptidyl transferase center and thus would serve to optimize ribosomal fidelity. In Escherichia coli O157:H7, this protein is Dual-specificity RNA methyltransferase RlmN.